The chain runs to 183 residues: Dual-action ribosomal maturation protein DarP (183 aa).

It belongs to the DarP family.

It is found in the cytoplasm. Its function is as follows. Member of a network of 50S ribosomal subunit biogenesis factors which assembles along the 30S-50S interface, preventing incorrect 23S rRNA structures from forming. Promotes peptidyl transferase center (PTC) maturation. This Salmonella enteritidis PT4 (strain P125109) protein is Dual-action ribosomal maturation protein DarP.